Consider the following 394-residue polypeptide: GTPase Era, mitochondrial (394 aa).

The region spanning 32-280 (KCLQLAVIGA…RDHLMSISPQ (249 aa)) is the Era-type G domain. Residues 40–47 (GAPNVGKS) are G1. GTP is bound at residue 40–47 (GAPNVGKS). Residues 66–70 (DTTTR) are G2. Positions 87-90 (DSPG) are G3. Residues 87–91 (DSPGA) and 160–163 (NKID) contribute to the GTP site. The segment at 160–163 (NKID) is G4. The segment at 259–261 (VSS) is G5.

It belongs to the TRAFAC class TrmE-Era-EngA-EngB-Septin-like GTPase superfamily. Era GTPase family.

Its subcellular location is the mitochondrion matrix. It localises to the mitochondrion inner membrane. Probable GTPase that plays a role in the mitochondrial ribosomal small subunit assembly. Specifically binds the 12S mitochondrial rRNA (12S mt-rRNA) to a 33 nucleotide section delineating the 3' terminal stem-loop region. May act as a chaperone that protects the 12S mt-rRNA on the 28S mitoribosomal subunit during ribosomal small subunit assembly. May play a role in positively regulating mitochondrial function. Plays a role in fertility. The polypeptide is GTPase Era, mitochondrial (Caenorhabditis elegans).